The chain runs to 621 residues: Chaperone protein HtpG (621 aa).

The tract at residues 1-328 (MTQEKKKFDA…SEDLPLNISR (328 aa)) is a; substrate-binding. Residues 329 to 544 (ESLQHNNVLE…DTAMDIRMER (216 aa)) form a b region. Residues 545–621 (FLIEQKQIAN…LNDILQKAIL (77 aa)) form a c region.

The protein belongs to the heat shock protein 90 family. As to quaternary structure, homodimer.

The protein localises to the cytoplasm. In terms of biological role, molecular chaperone. Has ATPase activity. The polypeptide is Chaperone protein HtpG (Rickettsia prowazekii (strain Madrid E)).